A 277-amino-acid polypeptide reads, in one-letter code: B3 domain-containing protein At3g19184 (277 aa).

Positions 33-94 (QSLRVSSSSS…LERRPRRSSR (62 aa)) are disordered. The TF-B3 DNA-binding region spans 130-221 (FTKPMLQSHV…TFKVYIIRVN (92 aa)). A compositionally biased stretch (acidic residues) spans 224 to 250 (ANNDSDGNEVNDDDSDGNEEDRDNDNE). The tract at residues 224-277 (ANNDSDGNEVNDDDSDGNEEDRDNDNESNEKQKETVSEGRQLRSSGKRKRRGRK) is disordered. A compositionally biased stretch (basic and acidic residues) spans 251–264 (SNEKQKETVSEGRQ). A compositionally biased stretch (basic residues) spans 268 to 277 (SGKRKRRGRK).

It localises to the nucleus. The sequence is that of B3 domain-containing protein At3g19184 from Arabidopsis thaliana (Mouse-ear cress).